Here is a 243-residue protein sequence, read N- to C-terminus: NAD(P)H-quinone oxidoreductase subunit K, chloroplastic (243 aa).

Residues Cys65, Cys66, Cys130, and Cys161 each coordinate [4Fe-4S] cluster.

This sequence belongs to the complex I 20 kDa subunit family. As to quaternary structure, NDH is composed of at least 16 different subunits, 5 of which are encoded in the nucleus. It depends on [4Fe-4S] cluster as a cofactor.

It is found in the plastid. The protein resides in the chloroplast thylakoid membrane. It catalyses the reaction a plastoquinone + NADH + (n+1) H(+)(in) = a plastoquinol + NAD(+) + n H(+)(out). The catalysed reaction is a plastoquinone + NADPH + (n+1) H(+)(in) = a plastoquinol + NADP(+) + n H(+)(out). NDH shuttles electrons from NAD(P)H:plastoquinone, via FMN and iron-sulfur (Fe-S) centers, to quinones in the photosynthetic chain and possibly in a chloroplast respiratory chain. The immediate electron acceptor for the enzyme in this species is believed to be plastoquinone. Couples the redox reaction to proton translocation, and thus conserves the redox energy in a proton gradient. This is NAD(P)H-quinone oxidoreductase subunit K, chloroplastic from Marchantia polymorpha (Common liverwort).